Consider the following 173-residue polypeptide: T-cell surface glycoprotein CD3 delta chain (173 aa).

The first 21 residues, 1–21 (MEHSGILASLILIAVLPQGSP), serve as a signal peptide directing secretion. Residues 22 to 105 (FKIQVTEYED…CVELDSGTMA (84 aa)) are Extracellular-facing. A disulfide bridge connects residues Cys-37 and Cys-73. Residues Asn-38, Asn-55, and Asn-74 are each glycosylated (N-linked (GlcNAc...) asparagine). A helical membrane pass occupies residues 106–126 (GVIFIDLIATLLLALGVYCFA). The Cytoplasmic portion of the chain corresponds to 127-173 (GHETGRPSGAAEVQALLKNEQLYQPLRDREDTQYSRLGGNWPRNKKS). Residues 138–166 (EVQALLKNEQLYQPLRDREDTQYSRLGGN) enclose the ITAM domain. Phosphotyrosine occurs at positions 149 and 160.

The TCR-CD3 complex is composed of a CD3D/CD3E and a CD3G/CD3E heterodimers that preferentially associate with TCRalpha and TCRbeta, respectively, to form TCRalpha/CD3E/CD3G and TCRbeta/CD3G/CD3E trimers. In turn, the hexamer interacts with CD3Z homodimer to form the TCR-CD3 complex. Alternatively, TCRalpha and TCRbeta can be replaced by TCRgamma and TCRdelta. Interacts with coreceptors CD4 and CD8. Phosphorylated on Tyr residues after T-cell receptor triggering by LCK in association with CD4/CD8.

Its subcellular location is the membrane. In terms of biological role, part of the TCR-CD3 complex present on T-lymphocyte cell surface that plays an essential role in adaptive immune response. When antigen presenting cells (APCs) activate T-cell receptor (TCR), TCR-mediated signals are transmitted across the cell membrane by the CD3 chains CD3D, CD3E, CD3G and CD3Z. All CD3 chains contain immunoreceptor tyrosine-based activation motifs (ITAMs) in their cytoplasmic domain. Upon TCR engagement, these motifs become phosphorylated by Src family protein tyrosine kinases LCK and FYN, resulting in the activation of downstream signaling pathways. In addition of this role of signal transduction in T-cell activation, CD3D plays an essential role in thymocyte differentiation. Indeed, participates in correct intracellular TCR-CD3 complex assembly and surface expression. In absence of a functional TCR-CD3 complex, thymocytes are unable to differentiate properly. Interacts with CD4 and CD8 and thus serves to establish a functional link between the TCR and coreceptors CD4 and CD8, which is needed for activation and positive selection of CD4 or CD8 T-cells. The chain is T-cell surface glycoprotein CD3 delta chain (Cd3d) from Mus musculus (Mouse).